The chain runs to 298 residues: MRGLDYRWIEALDSVVSKGSFERAAEQLFISQSAVSQRIKQLEKYLAQPVLIREQPPRPTLVGKKLLGLYRRVCLIEQELVPELTNQEHVRPVSMSIATNADSLATWLLPALDKVMKSRQVELNLVIYGESRTLDKLKNGEVVGAISLEPQPITGCSAEYLGQMEYLCVASPEFYQKYFAKGVTPRSLIKAPAVSYDQYDELHNKFLWDYFAVPRDKVINHTVGSSEAFVRLALSGAAYCLIPRLQIISELESGALINMTPDFMLSYPIFWHHWQLETGVLLEISEAITAYAKSVLPQ.

One can recognise an HTH lysR-type domain in the interval 4–60; sequence LDYRWIEALDSVVSKGSFERAAEQLFISQSAVSQRIKQLEKYLAQPVLIREQPPRPT. The segment at residues 21 to 40 is a DNA-binding region (H-T-H motif); it reads FERAAEQLFISQSAVSQRIK.

This sequence belongs to the LysR transcriptional regulatory family. Homodimer.

Functionally, controls the transcription of genes involved in arginine and lysine metabolism. The chain is HTH-type transcriptional regulator ArgP from Vibrio cholerae serotype O1 (strain ATCC 39315 / El Tor Inaba N16961).